Consider the following 590-residue polypeptide: Aspartate--tRNA(Asp/Asn) ligase (590 aa).

Glutamate 170 serves as a coordination point for L-aspartate. An aspartate region spans residues 194–197 (QLFK). Arginine 216 provides a ligand contact to L-aspartate. ATP contacts are provided by residues 216–218 (RDE) and glutamine 225. Histidine 448 serves as a coordination point for L-aspartate. Residue glutamate 482 participates in ATP binding. Position 489 (arginine 489) interacts with L-aspartate. 534–537 (GWDR) is an ATP binding site. Residues 559–590 (GGVDPLTEAPAPITAQQRKESGIDAKPGKDGA) are disordered. Residues 575–590 (QRKESGIDAKPGKDGA) are compositionally biased toward basic and acidic residues.

It belongs to the class-II aminoacyl-tRNA synthetase family. Type 1 subfamily. In terms of assembly, homodimer.

It is found in the cytoplasm. The enzyme catalyses tRNA(Asx) + L-aspartate + ATP = L-aspartyl-tRNA(Asx) + AMP + diphosphate. Functionally, aspartyl-tRNA synthetase with relaxed tRNA specificity since it is able to aspartylate not only its cognate tRNA(Asp) but also tRNA(Asn). Reaction proceeds in two steps: L-aspartate is first activated by ATP to form Asp-AMP and then transferred to the acceptor end of tRNA(Asp/Asn). The protein is Aspartate--tRNA(Asp/Asn) ligase of Mycolicibacterium gilvum (strain PYR-GCK) (Mycobacterium gilvum (strain PYR-GCK)).